The following is a 693-amino-acid chain: Glycine--tRNA ligase beta subunit (693 aa).

Belongs to the class-II aminoacyl-tRNA synthetase family. As to quaternary structure, tetramer of two alpha and two beta subunits.

Its subcellular location is the cytoplasm. The catalysed reaction is tRNA(Gly) + glycine + ATP = glycyl-tRNA(Gly) + AMP + diphosphate. The polypeptide is Glycine--tRNA ligase beta subunit (Vibrio vulnificus (strain CMCP6)).